We begin with the raw amino-acid sequence, 224 residues long: tRNA (guanine-N(7)-)-methyltransferase (224 aa).

Glu56, Glu81, Asp108, and Asp131 together coordinate S-adenosyl-L-methionine. The active site involves Asp131. Residues Lys135, Asp167, and 202–205 contribute to the substrate site; that span reads TKFE.

Belongs to the class I-like SAM-binding methyltransferase superfamily. TrmB family.

It carries out the reaction guanosine(46) in tRNA + S-adenosyl-L-methionine = N(7)-methylguanosine(46) in tRNA + S-adenosyl-L-homocysteine. It participates in tRNA modification; N(7)-methylguanine-tRNA biosynthesis. Functionally, catalyzes the formation of N(7)-methylguanine at position 46 (m7G46) in tRNA. The protein is tRNA (guanine-N(7)-)-methyltransferase of Nitrosomonas europaea (strain ATCC 19718 / CIP 103999 / KCTC 2705 / NBRC 14298).